A 425-amino-acid chain; its full sequence is Multifunctional CCA protein (425 aa).

Glycine 8 and arginine 11 together coordinate ATP. 2 residues coordinate CTP: glycine 8 and arginine 11. Mg(2+) is bound by residues aspartate 21 and aspartate 23. Arginine 91, arginine 141, and arginine 144 together coordinate ATP. Arginine 91, arginine 141, and arginine 144 together coordinate CTP. Positions 230–331 (TGVHLMMVLD…VRLLERCDAI (102 aa)) constitute an HD domain.

It belongs to the tRNA nucleotidyltransferase/poly(A) polymerase family. Bacterial CCA-adding enzyme type 1 subfamily. In terms of assembly, monomer. Can also form homodimers and oligomers. The cofactor is Mg(2+). Ni(2+) is required as a cofactor.

The catalysed reaction is a tRNA precursor + 2 CTP + ATP = a tRNA with a 3' CCA end + 3 diphosphate. It catalyses the reaction a tRNA with a 3' CCA end + 2 CTP + ATP = a tRNA with a 3' CCACCA end + 3 diphosphate. Catalyzes the addition and repair of the essential 3'-terminal CCA sequence in tRNAs without using a nucleic acid template. Adds these three nucleotides in the order of C, C, and A to the tRNA nucleotide-73, using CTP and ATP as substrates and producing inorganic pyrophosphate. tRNA 3'-terminal CCA addition is required both for tRNA processing and repair. Also involved in tRNA surveillance by mediating tandem CCA addition to generate a CCACCA at the 3' terminus of unstable tRNAs. While stable tRNAs receive only 3'-terminal CCA, unstable tRNAs are marked with CCACCA and rapidly degraded. This is Multifunctional CCA protein from Acidovorax ebreus (strain TPSY) (Diaphorobacter sp. (strain TPSY)).